Consider the following 720-residue polypeptide: Serrate RNA effector molecule (720 aa).

Disordered stretches follow at residues methionine 1–arginine 192, leucine 288–aspartate 335, and glutamate 361–glycine 380. A compositionally biased stretch (low complexity) spans serine 33–proline 47. The segment covering leucine 48–serine 76 has biased composition (basic and acidic residues). Phosphoserine occurs at positions 76, 90, and 92. The span at aspartate 99–tyrosine 115 shows a compositional bias: basic residues. 2 stretches are compositionally biased toward basic and acidic residues: residues arginine 116–arginine 126 and proline 136–histidine 164. Positions leucine 288–proline 297 are enriched in polar residues. The segment covering glutamate 368 to histidine 378 has biased composition (basic and acidic residues). The C2H2-type zinc finger occupies tyrosine 498–histidine 523. Disordered regions lie at residues tyrosine 543 to glycine 622 and arginine 666 to leucine 687. A compositionally biased stretch (basic and acidic residues) spans proline 570–asparagine 607. Gly residues predominate over residues aspartate 608–glycine 622. The residue at position 689 (serine 689) is a Phosphoserine.

This sequence belongs to the ARS2 family. Interacts with HYL1. Interacts with RCF3, RS40 and RS41. As to expression, expressed in shoot meristems and in emerging organ primordia throughout development.

It localises to the nucleus. Its subcellular location is the nucleus speckle. Acts as a mediator between the cap-binding complex (CBC) and both the pre-mRNA splicing and primary microRNAs (miRNAs) processing machinery. Required for proper processing of primary miRNAs to miRNAs, thereby playing a role in RNA-mediated gene silencing (RNAi) by miRNAs. Does not participate in sense post-transcriptional gene silencing. Acts as a regulator of meristem activity and adaxial leaf fate via the miRNA gene-silencing pathway by regulating the expression of PHB and by limiting the competence of shoot tissue to respond to KNOX expression. Its function is however not limited to miRNA-mediated repression of leaf polarity genes, but rather acts as a general regulator of primary microRNAs processing. Also critical for the accumulation of the trans-acting small interfering RNA (ta-siRNA). Required for pre-mRNA splicing. The sequence is that of Serrate RNA effector molecule (SE) from Arabidopsis thaliana (Mouse-ear cress).